Reading from the N-terminus, the 334-residue chain is Phenylalanine--tRNA ligase alpha subunit (334 aa).

Mg(2+) is bound at residue Glu-249.

Belongs to the class-II aminoacyl-tRNA synthetase family. Phe-tRNA synthetase alpha subunit type 1 subfamily. Tetramer of two alpha and two beta subunits. It depends on Mg(2+) as a cofactor.

It localises to the cytoplasm. The enzyme catalyses tRNA(Phe) + L-phenylalanine + ATP = L-phenylalanyl-tRNA(Phe) + AMP + diphosphate + H(+). The chain is Phenylalanine--tRNA ligase alpha subunit from Desulfosudis oleivorans (strain DSM 6200 / JCM 39069 / Hxd3) (Desulfococcus oleovorans).